We begin with the raw amino-acid sequence, 89 residues long: UPF0297 protein SMU_2079c (89 aa).

Belongs to the UPF0297 family.

This Streptococcus mutans serotype c (strain ATCC 700610 / UA159) protein is UPF0297 protein SMU_2079c.